A 187-amino-acid chain; its full sequence is Peptidyl-tRNA hydrolase (187 aa).

Residue Tyr15 participates in tRNA binding. The Proton acceptor role is filled by His20. Phe65, Asn67, and Asn113 together coordinate tRNA.

This sequence belongs to the PTH family. In terms of assembly, monomer.

Its subcellular location is the cytoplasm. The catalysed reaction is an N-acyl-L-alpha-aminoacyl-tRNA + H2O = an N-acyl-L-amino acid + a tRNA + H(+). In terms of biological role, hydrolyzes ribosome-free peptidyl-tRNAs (with 1 or more amino acids incorporated), which drop off the ribosome during protein synthesis, or as a result of ribosome stalling. Catalyzes the release of premature peptidyl moieties from peptidyl-tRNA molecules trapped in stalled 50S ribosomal subunits, and thus maintains levels of free tRNAs and 50S ribosomes. This is Peptidyl-tRNA hydrolase from Methylococcus capsulatus (strain ATCC 33009 / NCIMB 11132 / Bath).